We begin with the raw amino-acid sequence, 152 residues long: Deoxyuridine 5'-triphosphate nucleotidohydrolase (152 aa).

Residues 72-74, Asn85, and 89-91 contribute to the substrate site; these read RSG and TID.

The protein belongs to the dUTPase family. Mg(2+) serves as cofactor.

The catalysed reaction is dUTP + H2O = dUMP + diphosphate + H(+). The protein operates within pyrimidine metabolism; dUMP biosynthesis; dUMP from dCTP (dUTP route): step 2/2. This enzyme is involved in nucleotide metabolism: it produces dUMP, the immediate precursor of thymidine nucleotides and it decreases the intracellular concentration of dUTP so that uracil cannot be incorporated into DNA. The polypeptide is Deoxyuridine 5'-triphosphate nucleotidohydrolase (Afipia carboxidovorans (strain ATCC 49405 / DSM 1227 / KCTC 32145 / OM5) (Oligotropha carboxidovorans)).